The chain runs to 509 residues: Aldehyde dehydrogenase 1A1 (509 aa).

NAD(+)-binding positions include 175-178 (IPWN), 201-204 (KPAE), 234-235 (GP), 254-255 (GS), and 277-279 (ELG). The active-site Proton acceptor is Glu277. The Nucleophile role is filled by Cys311. Residues 357–361 (EQFQK) and 408–410 (EIF) contribute to the NAD(+) site.

Belongs to the aldehyde dehydrogenase family. As to quaternary structure, homotetramer.

The protein resides in the cytoplasm. Its subcellular location is the cytosol. It is found in the cell projection. It localises to the axon. The enzyme catalyses an aldehyde + NAD(+) + H2O = a carboxylate + NADH + 2 H(+). The catalysed reaction is all-trans-retinal + NAD(+) + H2O = all-trans-retinoate + NADH + 2 H(+). It carries out the reaction 9-cis-retinal + NAD(+) + H2O = 9-cis-retinoate + NADH + 2 H(+). It catalyses the reaction 11-cis-retinal + NAD(+) + H2O = 11-cis-retinoate + NADH + 2 H(+). The enzyme catalyses 13-cis-retinal + NAD(+) + H2O = 13-cis-retinoate + NADH + 2 H(+). The catalysed reaction is 3-deoxyglucosone + NAD(+) + H2O = 2-dehydro-3-deoxy-D-gluconate + NADH + 2 H(+). It carries out the reaction (E)-4-hydroxynon-2-enal + NAD(+) + H2O = (E)-4-hydroxynon-2-enoate + NADH + 2 H(+). It catalyses the reaction malonaldehyde + NAD(+) + H2O = 3-oxopropanoate + NADH + 2 H(+). The enzyme catalyses hexanal + NAD(+) + H2O = hexanoate + NADH + 2 H(+). The catalysed reaction is propanal + NAD(+) + H2O = propanoate + NADH + 2 H(+). It carries out the reaction acetaldehyde + NAD(+) + H2O = acetate + NADH + 2 H(+). It catalyses the reaction benzaldehyde + NAD(+) + H2O = benzoate + NADH + 2 H(+). The enzyme catalyses 4-aminobutanal + NAD(+) + H2O = 4-aminobutanoate + NADH + 2 H(+). Its pathway is cofactor metabolism; retinol metabolism. Its function is as follows. Cytosolic dehydrogenase that catalyzes the irreversible oxidation of a wide range of aldehydes to their corresponding carboxylic acid. Functions downstream of retinol dehydrogenases and catalyzes the oxidation of retinaldehyde into retinoic acid, the second step in the oxidation of retinol/vitamin A into retinoic acid. This pathway is crucial to control the levels of retinol and retinoic acid, two important molecules which excess can be teratogenic and cytotoxic. Also oxidizes aldehydes resulting from lipid peroxidation like (E)-4-hydroxynon-2-enal/HNE, malonaldehyde and hexanal that form protein adducts and are highly cytotoxic. By participating for instance to the clearance of (E)-4-hydroxynon-2-enal/HNE in the lens epithelium prevents the formation of HNE-protein adducts and lens opacification. Also functions downstream of fructosamine-3-kinase in the fructosamine degradation pathway by catalyzing the oxidation of 3-deoxyglucosone, the carbohydrate product of fructosamine 3-phosphate decomposition, which is itself a potent glycating agent that may react with lysine and arginine side-chains of proteins. Also has an aminobutyraldehyde dehydrogenase activity and is probably part of an alternative pathway for the biosynthesis of GABA/4-aminobutanoate in midbrain, thereby playing a role in GABAergic synaptic transmission. This Gallus gallus (Chicken) protein is Aldehyde dehydrogenase 1A1.